The primary structure comprises 973 residues: Mediator of RNA polymerase II transcription subunit 16 (973 aa).

The protein belongs to the Mediator complex subunit 16 family. In terms of assembly, component of the Mediator complex.

The protein resides in the nucleus. In terms of biological role, component of the Mediator complex, a coactivator involved in the regulated transcription of nearly all RNA polymerase II-dependent genes. Mediator functions as a bridge to convey information from gene-specific regulatory proteins to the basal RNA polymerase II transcription machinery. Mediator is recruited to promoters by direct interactions with regulatory proteins and serves as a scaffold for the assembly of a functional preinitiation complex with RNA polymerase II and the general transcription factors. This chain is Mediator of RNA polymerase II transcription subunit 16 (SIN4), found in Candida glabrata (strain ATCC 2001 / BCRC 20586 / JCM 3761 / NBRC 0622 / NRRL Y-65 / CBS 138) (Yeast).